A 181-amino-acid polypeptide reads, in one-letter code: ATP-dependent protease subunit HslV (181 aa).

Residue threonine 9 is part of the active site. The Na(+) site is built by glycine 164, cysteine 167, and threonine 170.

The protein belongs to the peptidase T1B family. HslV subfamily. As to quaternary structure, a double ring-shaped homohexamer of HslV is capped on each side by a ring-shaped HslU homohexamer. The assembly of the HslU/HslV complex is dependent on binding of ATP.

The protein localises to the cytoplasm. The enzyme catalyses ATP-dependent cleavage of peptide bonds with broad specificity.. Its activity is regulated as follows. Allosterically activated by HslU binding. In terms of biological role, protease subunit of a proteasome-like degradation complex believed to be a general protein degrading machinery. This is ATP-dependent protease subunit HslV from Gemmatimonas aurantiaca (strain DSM 14586 / JCM 11422 / NBRC 100505 / T-27).